We begin with the raw amino-acid sequence, 122 residues long: Protein preY, mitochondrial (122 aa).

Residues 1-40 constitute a mitochondrion transit peptide; it reads MLAVRAWGRTYNTLVQRKLNAACPTGALPAVTLRPLHCSL. Residues 56 to 102 enclose the TRM112 domain; that stretch reads DPTLLQFLVCPLSRKSLRYEESTNELINDELGIAYPIVDGIPNMIPQ.

This sequence belongs to the PREY family.

The protein localises to the mitochondrion. Its function is as follows. In mitochondria, S-adenosylmethionine-dependent methyltransferase chaperone that supports both coenzyme Q biosynthesis and NADH:ubiquinone oxidoreductase complex (complex I, MT-ND1) assembly. This chain is Protein preY, mitochondrial (pyurf), found in Xenopus tropicalis (Western clawed frog).